We begin with the raw amino-acid sequence, 157 residues long: Prefoldin subunit alpha (157 aa).

Belongs to the prefoldin subunit alpha family. As to quaternary structure, heterohexamer of two alpha and four beta subunits.

Its subcellular location is the cytoplasm. Functionally, molecular chaperone capable of stabilizing a range of proteins. Seems to fulfill an ATP-independent, HSP70-like function in archaeal de novo protein folding. In Methanopyrus kandleri (strain AV19 / DSM 6324 / JCM 9639 / NBRC 100938), this protein is Prefoldin subunit alpha.